A 107-amino-acid chain; its full sequence is Defensin-like protein 242 (107 aa).

Positions 1–22 (MKVVAIFLASCVLFSLIPTHLS) are cleaved as a signal peptide. Disulfide bonds link C45/C100, C55/C84, C65/C94, and C82/C96.

Belongs to the DEFL family.

The protein resides in the secreted. The polypeptide is Defensin-like protein 242 (SCRL10) (Arabidopsis thaliana (Mouse-ear cress)).